Here is a 411-residue protein sequence, read N- to C-terminus: SH3 and cysteine-rich domain-containing protein 2 (411 aa).

Residues 1–29 (MTEMSEKENEPDDAATHSPPGTVSALQET) are disordered. Over residues 19–29 (PPGTVSALQET) the composition is skewed to polar residues. Ser48 is modified (phosphoserine). The disordered stretch occupies residues 64-95 (TEVLLTPPTPLPPPSPPPTASDRGLATPSPSP). Residues 70–82 (PPTPLPPPSPPPT) are compositionally biased toward pro residues. The Phorbol-ester/DAG-type zinc-finger motif lies at 110 to 161 (LHSFQEHVFKRASPCELCHQLIVGNSKQGLRCKMCKVSVHLWCSEEISHQQC). Disordered stretches follow at residues 174–203 (SSPLLVHEPPPVCATSKESPPTGDSGKVDP) and 219–288 (RSSF…ATLR). Residues 219–232 (RSSFSSTSESPTRS) are compositionally biased toward low complexity. 2 consecutive SH3 domains span residues 292-351 (GPMY…RVRP) and 354-411 (NVWR…LTEI).

As to quaternary structure, interacts (via SH3 domains) with CACNA1S. Interacts (via SH3 domains) with CACNA1C. Has much lower affinity for CACNA1C than for CACNA1S.

The protein localises to the cytoplasm. It localises to the cytosol. The protein resides in the cell membrane. It is found in the sarcolemma. Its function is as follows. Plays a redundant role in promoting the expression of calcium channel CACNA1S at the cell membrane, and thereby contributes to increased channel activity. Slows down the inactivation rate of the calcium channel CACNA1C. The protein is SH3 and cysteine-rich domain-containing protein 2 (STAC2) of Homo sapiens (Human).